We begin with the raw amino-acid sequence, 241 residues long: Chalcone--flavanone isomerase C (241 aa).

Positions 50, 115, and 192 each coordinate substrate.

It belongs to the chalcone isomerase family.

The catalysed reaction is a chalcone = a flavanone.. The protein operates within secondary metabolite biosynthesis; flavonoid biosynthesis. In terms of biological role, catalyzes the intramolecular cyclization of bicyclic chalcones into tricyclic (S)-flavanones. Responsible for the isomerization of 4,2',4',6'-tetrahydroxychalcone (also termed chalcone) into naringenin. In Petunia hybrida (Petunia), this protein is Chalcone--flavanone isomerase C (CHI3).